The chain runs to 199 residues: Small ribosomal subunit protein uS7 (199 aa).

It belongs to the universal ribosomal protein uS7 family. Part of the 30S ribosomal subunit.

In terms of biological role, one of the primary rRNA binding proteins, it binds directly to 16S rRNA where it nucleates assembly of the head domain of the 30S subunit. Is located at the subunit interface close to the decoding center. In Cenarchaeum symbiosum (strain A), this protein is Small ribosomal subunit protein uS7.